Here is a 214-residue protein sequence, read N- to C-terminus: Riboflavin kinase (214 aa).

An H-T-H motif-like region spans residues 1–91 (MRSIMEVETL…YCSIFEDGGA (91 aa)). Residues 92–214 (PVMRGKVVTG…DGDEVEVTLE (123 aa)) form a riboflavin kinase region. 101–106 (GLGEGQ) contributes to the CDP binding site. Residues threonine 130 and asparagine 132 each coordinate Mg(2+). 2 residues coordinate FMN: threonine 182 and glutamate 190. A CDP-binding site is contributed by 195 to 198 (IKLR).

Belongs to the archaeal riboflavin kinase family. Requires Mg(2+) as cofactor.

The catalysed reaction is riboflavin + CTP = CDP + FMN + H(+). It participates in cofactor biosynthesis; FMN biosynthesis; FMN from riboflavin (CTP route): step 1/1. Catalyzes the CTP-dependent phosphorylation of riboflavin (vitamin B2) to form flavin mononucleotide (FMN). The polypeptide is Riboflavin kinase (ribK) (Methanocella arvoryzae (strain DSM 22066 / NBRC 105507 / MRE50)).